A 277-amino-acid chain; its full sequence is 2-dehydro-3-deoxyphosphooctonate aldolase (277 aa).

Belongs to the KdsA family.

The protein localises to the cytoplasm. It catalyses the reaction D-arabinose 5-phosphate + phosphoenolpyruvate + H2O = 3-deoxy-alpha-D-manno-2-octulosonate-8-phosphate + phosphate. It functions in the pathway carbohydrate biosynthesis; 3-deoxy-D-manno-octulosonate biosynthesis; 3-deoxy-D-manno-octulosonate from D-ribulose 5-phosphate: step 2/3. Its pathway is bacterial outer membrane biogenesis; lipopolysaccharide biosynthesis. The chain is 2-dehydro-3-deoxyphosphooctonate aldolase from Syntrophotalea carbinolica (strain DSM 2380 / NBRC 103641 / GraBd1) (Pelobacter carbinolicus).